The primary structure comprises 95 residues: uncharacterized protein (95 aa).

The helical transmembrane segment at 45–65 (WLSGLAFVLQAALVMPVVLAF) threads the bilayer.

It is found in the membrane. This is an uncharacterized protein from Mycobacterium leprae (strain TN).